The following is a 484-amino-acid chain: Glutamyl-tRNA(Gln) amidotransferase subunit A (484 aa).

Active-site charge relay system residues include K77 and S152. S176 acts as the Acyl-ester intermediate in catalysis.

It belongs to the amidase family. GatA subfamily. As to quaternary structure, heterotrimer of A, B and C subunits.

It carries out the reaction L-glutamyl-tRNA(Gln) + L-glutamine + ATP + H2O = L-glutaminyl-tRNA(Gln) + L-glutamate + ADP + phosphate + H(+). Allows the formation of correctly charged Gln-tRNA(Gln) through the transamidation of misacylated Glu-tRNA(Gln) in organisms which lack glutaminyl-tRNA synthetase. The reaction takes place in the presence of glutamine and ATP through an activated gamma-phospho-Glu-tRNA(Gln). The sequence is that of Glutamyl-tRNA(Gln) amidotransferase subunit A from Pseudomonas aeruginosa (strain ATCC 15692 / DSM 22644 / CIP 104116 / JCM 14847 / LMG 12228 / 1C / PRS 101 / PAO1).